A 491-amino-acid polypeptide reads, in one-letter code: Glutamyl-tRNA(Gln) amidotransferase subunit A (491 aa).

Residues Lys78 and Ser158 each act as charge relay system in the active site. Ser182 acts as the Acyl-ester intermediate in catalysis.

This sequence belongs to the amidase family. GatA subfamily. In terms of assembly, heterotrimer of A, B and C subunits.

It catalyses the reaction L-glutamyl-tRNA(Gln) + L-glutamine + ATP + H2O = L-glutaminyl-tRNA(Gln) + L-glutamate + ADP + phosphate + H(+). Functionally, allows the formation of correctly charged Gln-tRNA(Gln) through the transamidation of misacylated Glu-tRNA(Gln) in organisms which lack glutaminyl-tRNA synthetase. The reaction takes place in the presence of glutamine and ATP through an activated gamma-phospho-Glu-tRNA(Gln). This is Glutamyl-tRNA(Gln) amidotransferase subunit A from Afipia carboxidovorans (strain ATCC 49405 / DSM 1227 / KCTC 32145 / OM5) (Oligotropha carboxidovorans).